Consider the following 122-residue polypeptide: Phycocyanin PC645 alpha-2 subunit (122 aa).

The (2R,3E)-phycocyanobilin site is built by D54 and R68. C70, K76, E77, and C92 together coordinate mesobiliverdin.

Belongs to the phycoerythrin family. As to quaternary structure, heterotetramer of 2 different alpha chains and 2 identical beta chains which form 2 alpha-beta heterodimers within the heterotetramer. Contains two phycocyanobilin chromophores and one mesobiliverdin chromophore with binding mediated by both the alpha and beta subunits.

Its subcellular location is the plastid. It localises to the chloroplast thylakoid membrane. Its function is as follows. Light-harvesting photosynthetic tetrapyrrole chromophore-protein from the phycobiliprotein complex. In Chroomonas sp. (strain CCMP270), this protein is Phycocyanin PC645 alpha-2 subunit.